The chain runs to 285 residues: 4-diphosphocytidyl-2-C-methyl-D-erythritol kinase (285 aa).

K10 is a catalytic residue. 92-102 lines the ATP pocket; the sequence is PFGAGLGGGSS. D134 is an active-site residue.

It belongs to the GHMP kinase family. IspE subfamily.

It carries out the reaction 4-CDP-2-C-methyl-D-erythritol + ATP = 4-CDP-2-C-methyl-D-erythritol 2-phosphate + ADP + H(+). Its pathway is isoprenoid biosynthesis; isopentenyl diphosphate biosynthesis via DXP pathway; isopentenyl diphosphate from 1-deoxy-D-xylulose 5-phosphate: step 3/6. In terms of biological role, catalyzes the phosphorylation of the position 2 hydroxy group of 4-diphosphocytidyl-2C-methyl-D-erythritol. The sequence is that of 4-diphosphocytidyl-2-C-methyl-D-erythritol kinase from Chloroherpeton thalassium (strain ATCC 35110 / GB-78).